The following is a 755-amino-acid chain: Metabotropic glutamate receptor-like protein B (755 aa).

A signal peptide spans M1 to S23. 3 N-linked (GlcNAc...) asparagine glycosylation sites follow: N16, N183, and N273. The Extracellular portion of the chain corresponds to K24–G385. A helical transmembrane segment spans residues I386–V406. Residues F407–S417 are Cytoplasmic-facing. A helical transmembrane segment spans residues P418–F438. The Extracellular segment spans residues S439 to S455. The helical transmembrane segment at I456–F476 threads the bilayer. At D477 to Y492 the chain is on the cytoplasmic side. The chain crosses the membrane as a helical span at residues P493 to G513. Over N514 to G541 the chain is Extracellular. The chain crosses the membrane as a helical span at residues S542–I562. The Cytoplasmic segment spans residues S563–K578. Residues P579–V599 form a helical membrane-spanning segment. Residues S600 to Q607 are Extracellular-facing. A helical transmembrane segment spans residues V608–G628. The Cytoplasmic portion of the chain corresponds to S629–L755. Disordered stretches follow at residues Q656 to G676 and F691 to E729. Acidic residues predominate over residues D694–D710.

In the N-terminal section; belongs to the BMP lipoprotein family. It in the C-terminal section; belongs to the G-protein coupled receptor 3 family. GABA-B receptor subfamily.

The protein localises to the membrane. The polypeptide is Metabotropic glutamate receptor-like protein B (grlB) (Dictyostelium discoideum (Social amoeba)).